A 130-amino-acid polypeptide reads, in one-letter code: Arginine decarboxylase proenzyme (130 aa).

Residue Ser78 is the Schiff-base intermediate with substrate; via pyruvic acid of the active site. A Pyruvic acid (Ser); by autocatalysis modification is found at Ser78. His83 acts as the Proton acceptor; for processing activity in catalysis. Residue Cys98 is the Proton donor; for catalytic activity of the active site.

It belongs to the prokaryotic AdoMetDC family. Type 1 subfamily. As to quaternary structure, heterooctamer of four alpha and four beta chains arranged as a tetramer of alpha/beta heterodimers. The cofactor is pyruvate. In terms of processing, is synthesized initially as an inactive proenzyme. Formation of the active enzyme involves a self-maturation process in which the active site pyruvoyl group is generated from an internal serine residue via an autocatalytic post-translational modification. Two non-identical subunits are generated from the proenzyme in this reaction, and the pyruvate is formed at the N-terminus of the alpha chain, which is derived from the carboxyl end of the proenzyme. The post-translation cleavage follows an unusual pathway, termed non-hydrolytic serinolysis, in which the side chain hydroxyl group of the serine supplies its oxygen atom to form the C-terminus of the beta chain, while the remainder of the serine residue undergoes an oxidative deamination to produce ammonia and the pyruvoyl group blocking the N-terminus of the alpha chain.

The enzyme catalyses L-arginine + H(+) = agmatine + CO2. The protein operates within amine and polyamine biosynthesis; agmatine biosynthesis; agmatine from L-arginine: step 1/1. Functionally, specifically catalyzes the decarboxylation of L-arginine to agmatine. Has no S-adenosylmethionine decarboxylase (AdoMetDC) activity. The sequence is that of Arginine decarboxylase proenzyme from Sulfolobus acidocaldarius (strain ATCC 33909 / DSM 639 / JCM 8929 / NBRC 15157 / NCIMB 11770).